The chain runs to 275 residues: NifU-like protein 5, mitochondrial (275 aa).

The transit peptide at 1 to 61 (MKGLTRLLNS…TNASRNCSRS (61 aa)) directs the protein to the mitochondrion.

Belongs to the NifU family.

The protein localises to the mitochondrion. Functionally, molecular scaffold for [Fe-S] cluster assembly of mitochondrial iron-sulfur proteins. This chain is NifU-like protein 5, mitochondrial (NIFU5), found in Arabidopsis thaliana (Mouse-ear cress).